Consider the following 173-residue polypeptide: MNIAPDSKVKTSLVLQMQNYFRSLPLNRGSVILDHYIQCLLRVLTAEEGVSMEQKVSDIESSLARCLQADEQQKNWAFRNLILYKIWENNLGNQPNVDPLRALYIIVAEYAFIKLLTAASVHERGRLEWDDVTNIVYSFHSRSQHNSEVAKNFHRHIETVRTGDDLSMIHLLT.

Belongs to the FliB family.

In terms of biological role, required for the secretion of flagellin and expression of motility. This Salmonella muenchen protein is Flagellar biosynthetic protein FliV (fliV).